The sequence spans 740 residues: MRRPYLLATAAGLALACSPLIAHAQFAPAGAGGEPSSSVPGPGNASEPTENSPKSQSYFAGPSPYAPQAPGVNAANLPDIESIDPSQVPAMAPQQSANPARGDWVAYGRDDHQTRYSPLSEITPENASKLKVAFVYHTGSYPRPGQVNKWAAETTPIKVGDGLYTCSAMNDIIKLDPATGKQIWRRNVDVKYHSIPYTAACKGVTYFTSSVVPEGQPCHNRLIEGTLDMRLIAVDAETGDFCPNFGHGGQVNLMQGLGESVPGFVSMTAPPPVINGVVVVNHEVLDGQRRWAPSGVIRGYDAESGKFVWAWDVNNSDDHSQPTGNRHYSRGTPNSWATMTGDNEEGLVYVPTGNSAADYYSALRSDAENKVSSAVVAIDVKTGSPRWVFQTAHKDVWDYDIGSQATLMDMPGPDGQTVPALIMPTKRGQTFVLDRRTGKPILPVEERPAPSPGVIPGDPRSPTQPWSVGMPALRVPDLKETDMWGMSPIDQLFCRIKFRRANYVGEFTPPSVDKPWIEYPGYNGGSDWGSMSYDPQSGILIANWNITPMYDQLVTRKKADSLGLMPIDDPNFKPGGGGAEGNGAMDGTPYGIVVTPFWDQYTGMMCNRPPYGMITAIDMKHGQKVLWQHPLGTARANGPWGLPTGLPWEIGTPNNGGSVVTGGGLIFIGAATDNQIRAIDEHTGKVVWSAVLPGGGQANPMTYEANGHQYVAIMAGGHHFMMTPVSDQLVVYALPDAIKQ.

The signal sequence occupies residues 1–29 (MRRPYLLATAAGLALACSPLIAHAQFAPA). 2 disordered regions span residues 28 to 105 (PAGA…GDWV) and 442 to 468 (LPVEERPAPSPGVIPGDPRSPTQPWSV). The segment covering 34–43 (EPSSSVPGPG) has biased composition (low complexity). Positions 46 to 58 (SEPTENSPKSQSY) are enriched in polar residues.

The protein belongs to the bacterial PQQ dehydrogenase family. The cofactor is pyrroloquinoline quinone.

The protein localises to the secreted. It catalyses the reaction glycerol + A = dihydroxyacetone + AH2. Its function is as follows. Catalyzes the oxidation of glycerol to glycerone. Also acts, more slowly, on a number of other polyols including D-sorbitol, D-arabinitol, D-mannitol, meso-erythritol, adonitol and propylene glycol. This Gluconobacter thailandicus protein is Glycerol dehydrogenase large subunit (sldA).